The sequence spans 489 residues: MYRLRALTAATVGMVQLTRRHHTGAFRSYQRRRLMLAALAGVTGISASAGLMWTRAYAEAGSSVKHEEQMREEEPLKDVAEEAESDGALESSSGEDEDEAGSEEKKKKQRIGFRDRKVMEYENRIRAYSTPDKIFRYFATLKIINEHGDAEVYMTPQDFVRSITPNEKQPENLGLDQFMVKRYDGKDFWQKISQDREKFADEDSIFYTLGECGLISFSDYIFLTTVLSTPQRNFEIAFKMFDLNGDGEVDLEEFEQVQSIIRSQTSMGMRHRDRSTTGNTLKTGGCSSALTTYFFGADLKGKLTISSFLEFQRKLQHDVLKLEFERNDPVDGRITEKQFGGMLLAYSGVQSRKLKQMQKNLKRMFKDAQGITFEEVENFFTFLKNVNDVDTALSFYHMAGASIDKATMKQVARTVAKVELSDHVCDVVFALFDCDGNGELSNKEFIAIMKQRLMRGLEKPKDMGFTRLVRAMWKCAQDTAWDFAMPKQQ.

A mitochondrion-targeting transit peptide spans Met1 to Leu34. The segment at Ser62 to Gln109 is disordered. A compositionally biased stretch (basic and acidic residues) spans Val64–Ala80. A compositionally biased stretch (acidic residues) spans Glu81–Gly101. The segment at Lys106 to Lys117 is polybasic region. The k/R-ring stretch occupies residues Lys133 to Arg136. Positions Thr229–Gln264 constitute an EF-hand 1 domain. 5 residues coordinate Ca(2+): Asp242, Asn244, Asp246, Glu248, and Glu253. The k/R-ring stretch occupies residues Arg270–Arg274. 2 EF-hand domains span residues Ile371–Val386 and Leu420–Arg455. Ca(2+) contacts are provided by Asp433, Asp435, Asn437, Glu439, and Glu444. Positions Arg467–Gln477 are C-helix region.

This sequence belongs to the MICU1 family. MICU1 subfamily. In terms of assembly, heterodimer; disulfide-linked; heterodimerizes with micu2. Component of the uniplex complex.

Its subcellular location is the mitochondrion intermembrane space. The protein localises to the mitochondrion inner membrane. In terms of biological role, calcium sensor of the mitochondrial calcium uniporter (mcu) channel, which senses calcium level via its EF-hand domains. micu1 and micu2 form a disulfide-linked heterodimer that stimulates and inhibits MCU activity, depending on the concentration of calcium. At low calcium levels, micu1 occludes the pore of the MCU channel, preventing mitochondrial calcium uptake. At higher calcium levels, calcium-binding to micu1 and micu2 induces a conformational change that weakens mcu-micu1 interactions and moves the micu1-micu2 heterodimer away from the pore, allowing calcium permeation through the mcu channel. Also required to protect against manganese toxicity by preventing manganese uptake by mcu. This Danio rerio (Zebrafish) protein is Calcium uptake protein 1, mitochondrial (micu1).